Consider the following 476-residue polypeptide: Aspartyl/glutamyl-tRNA(Asn/Gln) amidotransferase subunit B (476 aa).

This sequence belongs to the GatB/GatE family. GatB subfamily. As to quaternary structure, heterotrimer of A, B and C subunits.

It catalyses the reaction L-glutamyl-tRNA(Gln) + L-glutamine + ATP + H2O = L-glutaminyl-tRNA(Gln) + L-glutamate + ADP + phosphate + H(+). It carries out the reaction L-aspartyl-tRNA(Asn) + L-glutamine + ATP + H2O = L-asparaginyl-tRNA(Asn) + L-glutamate + ADP + phosphate + 2 H(+). Its function is as follows. Allows the formation of correctly charged Asn-tRNA(Asn) or Gln-tRNA(Gln) through the transamidation of misacylated Asp-tRNA(Asn) or Glu-tRNA(Gln) in organisms which lack either or both of asparaginyl-tRNA or glutaminyl-tRNA synthetases. The reaction takes place in the presence of glutamine and ATP through an activated phospho-Asp-tRNA(Asn) or phospho-Glu-tRNA(Gln). The protein is Aspartyl/glutamyl-tRNA(Asn/Gln) amidotransferase subunit B of Clostridium botulinum (strain ATCC 19397 / Type A).